Consider the following 286-residue polypeptide: Protein HEAT-STRESS-ASSOCIATED 32 (286 aa).

It belongs to the phosphosulfolactate synthase family.

Transactivator required, together with HSP101, for long-term acquired thermotolerance (LAT) maintenance, probably by regulating heat-inducible genes expression, thus being a cellular component of thermomemory. This chain is Protein HEAT-STRESS-ASSOCIATED 32, found in Arabidopsis thaliana (Mouse-ear cress).